The chain runs to 492 residues: Trehalose-phosphatase (492 aa).

Positions 1–55 are disordered; it reads MTETVTDQGKQRSSKLQKNEAAKDEQVEGKGKETLESGTDKSAEQNSSLLVGQPD. Residues 17-43 show a composition bias toward basic and acidic residues; it reads QKNEAAKDEQVEGKGKETLESGTDKSA. Residues D213 and D215 each contribute to the Mg(2+) site. Residue D215 is the Proton donor/acceptor of the active site. Residue 332–334 coordinates substrate; it reads QRK. Position 424 (D424) interacts with Mg(2+).

Belongs to the gob-1 trehalose phosphatase family. Requires Mg(2+) as cofactor.

It carries out the reaction alpha,alpha-trehalose 6-phosphate + H2O = alpha,alpha-trehalose + phosphate. Inhibited by trehalose 6-sulfate. Its function is as follows. Catalyzes the hydrolysis of trehalose 6-phosphate to trehalose and phosphate; prevents the accumulation of toxic levels of trehalose 6-phosphate. The protein is Trehalose-phosphatase of Brugia malayi (Filarial nematode worm).